A 508-amino-acid polypeptide reads, in one-letter code: Glycogen synthase (508 aa).

K27 contributes to the ADP-alpha-D-glucose binding site.

This sequence belongs to the glycosyltransferase 1 family. Bacterial/plant glycogen synthase subfamily.

It catalyses the reaction [(1-&gt;4)-alpha-D-glucosyl](n) + ADP-alpha-D-glucose = [(1-&gt;4)-alpha-D-glucosyl](n+1) + ADP + H(+). It functions in the pathway glycan biosynthesis; glycogen biosynthesis. Its function is as follows. Synthesizes alpha-1,4-glucan chains using ADP-glucose. The polypeptide is Glycogen synthase (Photobacterium profundum (strain SS9)).